The primary structure comprises 761 residues: Prolyl endopeptidase FAP (761 aa).

The Cytoplasmic portion of the chain corresponds to 1–4 (MKTW). Residues 5-25 (LKTVFGVTTLAALALVVICIV) form a helical; Signal-anchor for type II membrane protein membrane-spanning segment. Residues 26–761 (LRPSRVYKPE…FLKQCFSLSD (736 aa)) lie on the Extracellular side of the membrane. Residues Asn49, Asn92, and Asn99 are each glycosylated (N-linked (GlcNAc...) asparagine). The substrate site is built by Glu203 and Glu204. N-linked (GlcNAc...) asparagine glycans are attached at residues Asn227 and Asn314. Cystine bridges form between Cys321–Cys332, Cys438–Cys441, and Cys448–Cys466. Ser624 acts as the Charge relay system in catalysis. Cys643 and Cys756 are disulfide-bonded. Asn679 carries an N-linked (GlcNAc...) asparagine glycan. Active-site charge relay system residues include Asp702 and His734.

This sequence belongs to the peptidase S9B family. As to quaternary structure, homodimer; homodimerization is required for activity of both plasma membrane and soluble forms. The monomer is inactive. Heterodimer with DPP4. Interacts with PLAUR; the interaction occurs at the cell surface of invadopodia membranes. Interacts with ITGB1. Interacts with ITGA3. Associates with integrin alpha-3/beta-1; the association occurs in a collagen-dependent manner at the cell surface of invadopodia membranes. N-glycosylated. Post-translationally, the N-terminus may be blocked. As to expression, expressed strongly in uterus, pancreas, submaxillary gland and skin, less in lymph node, ovary, skeletal muscle, adrenal and bone marrow. Expressed in reactive stromal fibroblast in epithelial cancers. Expressed in melanocytes but not melanomas (at protein level). Detected in fibroblasts, in placenta, uterus, embryos from day 7-19 and in newborn mice (P1).

The protein resides in the cell surface. It is found in the cell membrane. Its subcellular location is the cell projection. It localises to the lamellipodium membrane. The protein localises to the invadopodium membrane. The protein resides in the ruffle membrane. It is found in the membrane. Its subcellular location is the secreted. The enzyme catalyses Hydrolysis of Pro-|-Xaa &gt;&gt; Ala-|-Xaa in oligopeptides.. It carries out the reaction Release of an N-terminal dipeptide, Xaa-Yaa-|-Zaa-, from a polypeptide, preferentially when Yaa is Pro, provided Zaa is neither Pro nor hydroxyproline.. Gelatinase activity is inhibited by serine-protease inhibitors, such as phenylmethylsulfonyl fluoride (PMSF), 4-(2-aminoethyl)-benzenesulfonyl fluoride hydrochloride (AEBSF), 4-amidino phenylsulfonyl fluoride (APSF) and diisopropyl fluorophosphate (DFP), N-ethylmaleimide (NEM) and phenylmethylsulfonyl fluoride (PMSF). Dipeptidyl peptidase activity is inhibited by 2,2'-azino-bis(3-ethylbenzthiazoline-6-sulfonic acid), diisopropylfluorophosphate (DFP). Prolyl endopeptidase activity is inhibited by the boronic acid peptide Ac-Gly-BoroPro, Ac-Gly-Pro-chloromethyl ketone and Thr-Ser-Gly-chloromethyl ketone. Functionally, cell surface glycoprotein serine protease that participates in extracellular matrix degradation and involved in many cellular processes including tissue remodeling, fibrosis, wound healing, inflammation and tumor growth. Both plasma membrane and soluble forms exhibit post-proline cleaving endopeptidase activity, with a marked preference for Ala/Ser-Gly-Pro-Ser/Asn/Ala consensus sequences, on substrate such as alpha-2-antiplasmin SERPINF2 and SPRY2. Degrade also gelatin, heat-denatured type I collagen, but not native collagen type I and IV, vibronectin, tenascin, laminin, fibronectin, fibrin or casein. Also has dipeptidyl peptidase activity, exhibiting the ability to hydrolyze the prolyl bond two residues from the N-terminus of synthetic dipeptide substrates provided that the penultimate residue is proline, with a preference for Ala-Pro, Ile-Pro, Gly-Pro, Arg-Pro and Pro-Pro. Natural neuropeptide hormones for dipeptidyl peptidase are the neuropeptide Y (NPY), peptide YY (PYY), substance P (TAC1) and brain natriuretic peptide 32 (NPPB). The plasma membrane form, in association with either DPP4, PLAUR or integrins, is involved in the pericellular proteolysis of the extracellular matrix (ECM), and hence promotes cell adhesion, migration and invasion through the ECM. Plays a role in tissue remodeling during development and wound healing. Participates in the cell invasiveness towards the ECM in malignant melanoma cancers. Enhances tumor growth progression by increasing angiogenesis, collagen fiber degradation and apoptosis and by reducing antitumor response of the immune system. Promotes glioma cell invasion through the brain parenchyma by degrading the proteoglycan brevican. Acts as a tumor suppressor in melanocytic cells through regulation of cell proliferation and survival in a serine protease activity-independent manner. The protein is Prolyl endopeptidase FAP of Mus musculus (Mouse).